The following is a 408-amino-acid chain: Tyrosine--tRNA ligase (408 aa).

The 'HIGH' region motif lies at 50 to 59 (PTGKDLTLGH). Residues 234 to 238 (KMSKS) carry the 'KMSKS' region motif. Lysine 237 provides a ligand contact to ATP. The 62-residue stretch at 346-407 (MQAARVLFTA…GKRKYGRVVL (62 aa)) folds into the S4 RNA-binding domain.

It belongs to the class-I aminoacyl-tRNA synthetase family. TyrS type 2 subfamily. In terms of assembly, homodimer.

The protein localises to the cytoplasm. The enzyme catalyses tRNA(Tyr) + L-tyrosine + ATP = L-tyrosyl-tRNA(Tyr) + AMP + diphosphate + H(+). In terms of biological role, catalyzes the attachment of tyrosine to tRNA(Tyr) in a two-step reaction: tyrosine is first activated by ATP to form Tyr-AMP and then transferred to the acceptor end of tRNA(Tyr). The polypeptide is Tyrosine--tRNA ligase (Symbiobacterium thermophilum (strain DSM 24528 / JCM 14929 / IAM 14863 / T)).